The chain runs to 158 residues: Peptide deformylase (158 aa).

2 residues coordinate Fe cation: Cys88 and His130. Residue Glu131 is part of the active site. Residue His134 coordinates Fe cation.

Belongs to the polypeptide deformylase family. Fe(2+) serves as cofactor.

It catalyses the reaction N-terminal N-formyl-L-methionyl-[peptide] + H2O = N-terminal L-methionyl-[peptide] + formate. Removes the formyl group from the N-terminal Met of newly synthesized proteins. Requires at least a dipeptide for an efficient rate of reaction. N-terminal L-methionine is a prerequisite for activity but the enzyme has broad specificity at other positions. This Agathobacter rectalis (strain ATCC 33656 / DSM 3377 / JCM 17463 / KCTC 5835 / VPI 0990) (Eubacterium rectale) protein is Peptide deformylase.